We begin with the raw amino-acid sequence, 334 residues long: Ribosomal RNA small subunit methyltransferase H (334 aa).

Residues 54-56, Asp-74, Phe-100, Asp-121, and Gln-128 each bind S-adenosyl-L-methionine; that span reads GGH. The disordered stretch occupies residues 272–318; that stretch reads RHSKGQYPEDENLPMPPKRPRYFSKPKRVGPSKAEISNNPRSRSAWL. Basic residues predominate over residues 289 to 301; sequence KRPRYFSKPKRVG.

This sequence belongs to the methyltransferase superfamily. RsmH family.

The protein resides in the cytoplasm. It carries out the reaction cytidine(1402) in 16S rRNA + S-adenosyl-L-methionine = N(4)-methylcytidine(1402) in 16S rRNA + S-adenosyl-L-homocysteine + H(+). Its function is as follows. Specifically methylates the N4 position of cytidine in position 1402 (C1402) of 16S rRNA. In Psychrobacter arcticus (strain DSM 17307 / VKM B-2377 / 273-4), this protein is Ribosomal RNA small subunit methyltransferase H.